Consider the following 377-residue polypeptide: tRNA-queuosine alpha-mannosyltransferase (377 aa).

This sequence belongs to the glycosyltransferase group 1 family. Glycosyltransferase 4 subfamily.

The catalysed reaction is queuosine(34) in tRNA(Asp) + GDP-alpha-D-mannose = O-4''-alpha-D-mannosylqueuosine(34) in tRNA(Asp) + GDP + H(+). Its function is as follows. Glycosyltransferase that specifically catalyzes mannosylation of cytoplasmic tRNA(Asp) modified with queuosine at position 34 (queuosine(34)). Mannosylates the cyclopentene moiety of queuosine(34) in tRNA(Asp) to form mannosyl-queuosine(34). The polypeptide is tRNA-queuosine alpha-mannosyltransferase (Drosophila melanogaster (Fruit fly)).